A 338-amino-acid polypeptide reads, in one-letter code: L-serine dehydratase (338 aa).

N6-(pyridoxal phosphate)lysine is present on lysine 39.

This sequence belongs to the serine/threonine dehydratase family. The cofactor is pyridoxal 5'-phosphate.

It is found in the cytoplasm. The catalysed reaction is L-serine = pyruvate + NH4(+). Its pathway is carbohydrate biosynthesis; gluconeogenesis. This chain is L-serine dehydratase (SDL1), found in Saccharomyces cerevisiae (strain AWRI1631) (Baker's yeast).